The sequence spans 405 residues: Multifunctional CCA protein (405 aa).

ATP contacts are provided by Gly-8 and Arg-11. Residues Gly-8 and Arg-11 each contribute to the CTP site. Mg(2+)-binding residues include Asp-21 and Asp-23. Residues Arg-91, Arg-137, and Arg-140 each contribute to the ATP site. CTP-binding residues include Arg-91, Arg-137, and Arg-140. Residues 225 to 326 (TGVHAMLVLD…LRLLRECDAL (102 aa)) enclose the HD domain.

The protein belongs to the tRNA nucleotidyltransferase/poly(A) polymerase family. Bacterial CCA-adding enzyme type 1 subfamily. Monomer. Can also form homodimers and oligomers. Requires Mg(2+) as cofactor. The cofactor is Ni(2+).

It carries out the reaction a tRNA precursor + 2 CTP + ATP = a tRNA with a 3' CCA end + 3 diphosphate. The catalysed reaction is a tRNA with a 3' CCA end + 2 CTP + ATP = a tRNA with a 3' CCACCA end + 3 diphosphate. In terms of biological role, catalyzes the addition and repair of the essential 3'-terminal CCA sequence in tRNAs without using a nucleic acid template. Adds these three nucleotides in the order of C, C, and A to the tRNA nucleotide-73, using CTP and ATP as substrates and producing inorganic pyrophosphate. tRNA 3'-terminal CCA addition is required both for tRNA processing and repair. Also involved in tRNA surveillance by mediating tandem CCA addition to generate a CCACCA at the 3' terminus of unstable tRNAs. While stable tRNAs receive only 3'-terminal CCA, unstable tRNAs are marked with CCACCA and rapidly degraded. The chain is Multifunctional CCA protein from Laribacter hongkongensis (strain HLHK9).